The chain runs to 255 residues: Coniferyl-alcohol dehydrogenase (255 aa).

NAD(+) is bound by residues 12–17, D36, 51–52, and G77; these read GVSSGI and DL. S117 contacts substrate. The NAD(+) site is built by Y157 and K161. Catalysis depends on Y157, which acts as the Proton acceptor.

This sequence belongs to the short-chain dehydrogenases/reductases (SDR) family.

It carries out the reaction (E)-coniferol + NADP(+) = (E)-coniferaldehyde + NADPH + H(+). Functionally, catalyzes the conversion of coniferyl alcohol into coniferyl aldehyde in the eugenol degradation pathway. Specific for coniferyl alcohol; does not act on cinnamyl alcohol, 4-coumaryl alcohol or sinapyl alcohol. The polypeptide is Coniferyl-alcohol dehydrogenase (calA) (Pseudomonas sp. (strain HR199 / DSM 7063)).